A 1009-amino-acid polypeptide reads, in one-letter code: MAAIKLLVLSLACACVIAHSPIPPASRTIFLDERLEGGAFENIDAFENIELSNVVASPYRLPTTTVPTHYKILWIIDIHQPVQTYSGNVVITLHATQAQVNEIVIHSDHMTLSSVVLRQGDTVIPTTPTAQPEYHFLRVKLNDGYLAYNADNAVLYTLSIDFTAPMRDDMYGIYNSWYRNLPDDANVRWMATTQFQATAARYAFPCYDEPGFKAKFDVTIRRPVGYSSWFCTRQKGSGPSTVAGYEEDEYHTTPTMSTYLLALIVSEYTSLPATNAAGEILHEVIARPGAINNGQAVYAQRVGQALLAEMSDHTGFDFYAQDPNLKMTQAAIPDFGAGAMENWGLLTYREAYLLYDEQHTNSYFKQIIAYILSHEIAHMWFGNLVTNAWWDVLWLNEGFARYYQYFLTAWVEDLGLATRFINEQVHASLLSDSSIYAHPLTNPGVGSPAAVSAMFSTVTYNKGASIIRMTEHLLGFDVHRTGLRNYLKDLAYKTAQPIDLFTALESAGNQAGALSAYGSDFDFVKYYESWTEQPGHPVLNVQINHQTGQMTITQRRFDIDTGHSVQNRNYIIPITFTTGANPSFDNTKPSHIISKGVTVIDRGVVGDYWTIFNIQQTGFYRVNYDDYTWNLIVLALRGADREKIHEYNRAQIVNDVFQFARSGLMTYQRALNILSFLEFETEYAPWVAAITGFNWLRNRLVGKPQLDELNEKIVQWSSKVMGELTYMPTEGEPFMRSYLRWQLAPVMCNLNVPACRAGARAIFEDLRVFGHEVPVDSRNWVYCNALRDGGAQEFNFLYNRFKSHNVYTEKIVLLQTLGCTSHVESLNTLLTDIVTPNQMIRPQDYTTAFNTAVSGNEVNTRLVWNYIQANLQLVFNAFASPRTPLSYIAARLRTVEEVVEYQTWLNTTAIQSALGTNYNAIYGDSVATYNSILWVSTIEDSLSTYLTNGNDVIEPSTSTTSTTAAPTTVTQPTITEPSTPTLPELTDSAMTSFASLFIISLGAILHLIL.

The N-terminal stretch at 1-15 (MAAIKLLVLSLACAC) is a signal peptide. The propeptide at 16-52 (VIAHSPIPPASRTIFLDERLEGGAFENIDAFENIELS) is activation peptide. 338–342 (GAMEN) provides a ligand contact to substrate. His374 is a binding site for Zn(2+). The active-site Proton acceptor is the Glu375. Residues His378 and Glu397 each contribute to the Zn(2+) site. An N-linked (GlcNAc...) asparagine glycan is attached at Asn906. The segment at 955-980 (PSTSTTSTTAAPTTVTQPTITEPSTP) is disordered. Residue Asp987 is the site of GPI-anchor amidated aspartate attachment. Residues 988-1009 (SAMTSFASLFIISLGAILHLIL) constitute a propeptide, removed in mature form.

This sequence belongs to the peptidase M1 family. The cofactor is Zn(2+).

The protein resides in the cell membrane. Binds to the B.thuringiensis toxin, CryIA(C). The chain is Membrane alanyl aminopeptidase from Heliothis virescens (Tobacco budworm moth).